The primary structure comprises 737 residues: MGFKGKYPQMVRETGFKLRQYRDGPLDWRLMGSYETERILREQNFELVDKALTHLSEAPLGTVLETHILDSGIAKYFVMSQYAIQYLMCCRTYLDECVTDLKEAHTTAQEEIATLRKSLSESNNEVVQLHKRITQIEAIREVVYPCHLCTKNFISNEALNVHIGRKHRVASPPSLTSATGKEKDRDKATDVHLINTIKMELEIKQLKERLNAAERNIKERSTGSKRVSPRQEQRHVGIQSNLAEPKEKDEDSGEARQSEASERKEQLTGLAERLSNFEEWQTQLKQSNEQFIQDINKRLEGLSHALEQSKQASASTPPLEDRVATPCLEDLERILTEKVAEIGKVSAHRLEEVVYHLEEGYKEKLGALERELKQLSVQKVQPEPVQTVPVASKIPKPVVRKEETNIDRIRKQVESEFLKQKHDDDTYSIEEAPRKGSEKPFPQLVTQVQVVEKEQPSAGSSDSNPTYTKSPREPAPNKQETKEATDVSDSLSQEETENEEERSLTEEEGTDVPTSGSEAAREDPTPKTIKPSGRIIKSPQKPLTRKDARKMVNRKLMSHGFDMKSKGISHNSLKRVNSELTEHRNKLKLQHPHFYATRNRIRKFVEKLCSAKFSERAEMLLKHKSPLKPMEVPGKGIPRSAISEKSEEDIASSQGEEQTDEQTDSSEQQTRSPSPQRLVSRDFKARLEEILVKPAATIRGASKSSLSSRPVPLPRKRVMFNTTEDGKSFNDSDDNLK.

The tract at residues 1 to 293 (MGFKGKYPQM…LKQSNEQFIQ (293 aa)) is interaction with Rab8. Residues 98 to 132 (VTDLKEAHTTAQEEIATLRKSLSESNNEVVQLHKR) adopt a coiled-coil conformation. A C2H2-type zinc finger spans residues 144–167 (YPCHLCTKNFISNEALNVHIGRKH). 5 disordered regions span residues 167-187 (HRVA…DRDK), 214-267 (ERNI…KEQL), 415-548 (SEFL…RKDA), 624-682 (KSPL…VSRD), and 698-737 (IRGA…DNLK). Basic and acidic residues-rich tracts occupy residues 244 to 266 (EPKE…RKEQ) and 415 to 438 (SEFL…KGSE). Over residues 457-469 (SAGSSDSNPTYTK) the composition is skewed to polar residues. A compositionally biased stretch (acidic residues) spans 492–510 (SQEETENEEERSLTEEEGT). Polar residues predominate over residues 665-677 (SSEQQTRSPSPQR). The span at 724–737 (EDGKSFNDSDDNLK) shows a compositional bias: basic and acidic residues.

The protein belongs to the DZIP C2H2-type zinc-finger protein family. As to quaternary structure, component of a ciliary transition zone (TZ)-localized complex composed of DZIP1, Fam92 and Cby. Interacts directly with Cby. Interacts with Cep290 (via N-terminus). Interacts (via N-terminus) with Rab8. In neurons of the second and third antennal segments, expressed at the tip of the dendrites.

It is found in the cytoplasm. It localises to the cytoskeleton. The protein resides in the microtubule organizing center. The protein localises to the centrosome. Its subcellular location is the centriole. It is found in the cilium basal body. Functionally, component of the DZIP1-Fam92-Cby complex which promotes ciliogenesis in sensory neurons and spermatocytes by acting downstream of Cep290 to initiate early ciliary membrane formation and thus transition zone (TZ) assembly. During spermatogenesis, also regulates distal elongation of the basal-body and their docking (anchoring) to the plasma membrane and as a consequence, regulates the initiation and proper elongation of axonemal microtubules. Within the complex, required to recruit or stabilize Rab8, Fam92 and Cby at the distal basal body of cilia to promote early ciliary membrane formation and initiate TZ assembly. Also acts with Fam92 to restrict Cep290 localization to the proximal part of the TZ. May also be involved in recruitment or stabilization of Mks1 at the TZ. The sequence is that of Cilium assembly protein DZIP1L from Drosophila melanogaster (Fruit fly).